Here is a 480-residue protein sequence, read N- to C-terminus: Gasdermin-C2 (480 aa).

Residues 1 to 226 form a triggers pyroptosis region; it reads MGYSFDRASK…TCVILPSATK (226 aa).

The protein belongs to the gasdermin family. In terms of assembly, homooligomer; homooligomeric ring-shaped pore complex containing 27-28 subunits when inserted in the membrane. In terms of processing, cleavage by CASP8 relieves autoinhibition by releasing the N-terminal moiety (Gasdermin-C2, N-terminal) that initiates pyroptosis. Post-translationally, palmitoylated.

Its subcellular location is the cytoplasm. It localises to the cytosol. It is found in the cell membrane. Its activity is regulated as follows. The full-length protein before cleavage is inactive: intramolecular interactions between N- and C-terminal domains mediate autoinhibition in the absence of activation signal. The intrinsic pyroptosis-inducing activity is carried by the released N-terminal moiety (Gasdermin-C2, N-terminal) following cleavage by caspase CASP8 in response to type-2 immunity following worm infection. Its function is as follows. This form constitutes the precursor of the pore-forming protein: upon cleavage, the released N-terminal moiety (Gasdermin-C2, N-terminal) binds to membranes and forms pores, triggering pyroptosis. Pore-forming protein that causes membrane permeabilization and pyroptosis in response to type-2 immunity. Produced by the cleavage of gasdermin-C2 in response to type-2 immunity following worm infection. After cleavage, moves to the plasma membrane where it strongly binds to membrane inner leaflet lipids. Homooligomerizes within the membrane and forms pores of 10-15 nanometers (nm) of inner diameter, triggering pyroptosis and lytic cell death in enterocytes. The protein is Gasdermin-C2 of Mus musculus (Mouse).